Reading from the N-terminus, the 321-residue chain is Protein-L-histidine N-pros-methyltransferase (321 aa).

An N-terminal signal peptide occupies residues 1-24; it reads MRLWLCWLGCYTLLLWALRRRMWA. Asparagine 89 is a glycosylation site (N-linked (GlcNAc...) asparagine). Glutamate 177, asparagine 213, and tyrosine 298 together coordinate S-adenosyl-L-homocysteine.

This sequence belongs to the METTL9 family.

Its subcellular location is the endoplasmic reticulum. The protein resides in the mitochondrion. The catalysed reaction is L-histidyl-[protein] + S-adenosyl-L-methionine = N(pros)-methyl-L-histidyl-[protein] + S-adenosyl-L-homocysteine + H(+). Its function is as follows. Protein-histidine N-methyltransferase that specifically catalyzes 1-methylhistidine (pros-methylhistidine) methylation of target proteins. Mediates methylation of proteins with a His-x-His (HxH) motif (where 'x' is preferably a small amino acid); 1-methylhistidine modification may affect the binding of zinc and other metals to its target proteins. The chain is Protein-L-histidine N-pros-methyltransferase from Gallus gallus (Chicken).